The primary structure comprises 206 residues: LexA repressor (206 aa).

The H-T-H motif DNA-binding region spans 28 to 48 (VREIGEAVGLASSSTVHGHLS). Catalysis depends on for autocatalytic cleavage activity residues S129 and K167.

This sequence belongs to the peptidase S24 family. In terms of assembly, homodimer.

It carries out the reaction Hydrolysis of Ala-|-Gly bond in repressor LexA.. Represses a number of genes involved in the response to DNA damage (SOS response), including recA and lexA. In the presence of single-stranded DNA, RecA interacts with LexA causing an autocatalytic cleavage which disrupts the DNA-binding part of LexA, leading to derepression of the SOS regulon and eventually DNA repair. The chain is LexA repressor from Staphylococcus epidermidis (strain ATCC 35984 / DSM 28319 / BCRC 17069 / CCUG 31568 / BM 3577 / RP62A).